Consider the following 544-residue polypeptide: NADH-quinone oxidoreductase subunit C/D (544 aa).

The tract at residues 1–138 (MLNCDMLIDS…KGQICTETED (138 aa)) is NADH dehydrogenase I subunit C. An NADH dehydrogenase I subunit D region spans residues 161-544 (MLLNVGPSHP…MNFIAGEFDR (384 aa)).

In the N-terminal section; belongs to the complex I 30 kDa subunit family. The protein in the C-terminal section; belongs to the complex I 49 kDa subunit family. In terms of assembly, NDH-1 is composed of 13 different subunits. Subunits NuoB, CD, E, F, and G constitute the peripheral sector of the complex.

The protein resides in the cell inner membrane. The catalysed reaction is a quinone + NADH + 5 H(+)(in) = a quinol + NAD(+) + 4 H(+)(out). NDH-1 shuttles electrons from NADH, via FMN and iron-sulfur (Fe-S) centers, to quinones in the respiratory chain. The immediate electron acceptor for the enzyme in this species is believed to be ubiquinone. Couples the redox reaction to proton translocation (for every two electrons transferred, four hydrogen ions are translocated across the cytoplasmic membrane), and thus conserves the redox energy in a proton gradient. This Aliarcobacter butzleri (strain RM4018) (Arcobacter butzleri) protein is NADH-quinone oxidoreductase subunit C/D.